The sequence spans 646 residues: Lipoteichoic acid synthase (646 aa).

Residues 1-7 (MKLHKKK) are Cytoplasmic-facing. Residues 8-28 (LTLFAFFILTVLTVTLKTYFS) form a helical membrane-spanning segment. The Extracellular portion of the chain corresponds to 29–43 (YYVDFSLGVKGLVQN). A helical transmembrane segment spans residues 44 to 64 (LILLMNPYSLIALVLSIFLFF). Residues 65–68 (KGKK) lie on the Cytoplasmic side of the membrane. A helical membrane pass occupies residues 69 to 89 (AFWFIFIGGFILTFLLYANVV). Residues 90–119 (YFRFFSDFLTFSTLNQAGNVESMGGAVTAS) are Extracellular-facing. A helical transmembrane segment spans residues 120–140 (FKWYDFVYFIDTIIYLFVLIF). Residues 141–153 (KQKWLDKRVFSKK) are Cytoplasmic-facing. The chain crosses the membrane as a helical span at residues 154-174 (FVPVVMAASIALFFLNLAFAE). Residues 175–646 (SDRPELLTRT…KTGPKGQERK (472 aa)) lie on the Extracellular side of the membrane. E255 and T300 together coordinate Mn(2+). Residue T300 is part of the active site. H416 is a substrate binding site. The Mn(2+) site is built by D475 and H476. The interval 579–646 (IYDNKNNEPM…KTGPKGQERK (68 aa)) is disordered. 2 stretches are compositionally biased toward basic and acidic residues: residues 580–607 (YDNK…KDLQ) and 625–646 (DFDK…QERK).

Belongs to the LTA synthase family. In terms of processing, proteolytically cleaved.

The protein resides in the cell membrane. It is found in the secreted. It functions in the pathway cell wall biogenesis; lipoteichoic acid biosynthesis. Catalyzes the polymerization of lipoteichoic acid (LTA) polyglycerol phosphate, a reaction that presumably uses phosphatidylglycerol (PG) as substrate. Is required for staphylococcal growth and cell division process. This chain is Lipoteichoic acid synthase (ltaS), found in Staphylococcus saprophyticus subsp. saprophyticus (strain ATCC 15305 / DSM 20229 / NCIMB 8711 / NCTC 7292 / S-41).